A 160-amino-acid chain; its full sequence is SsrA-binding protein (160 aa).

It belongs to the SmpB family.

The protein localises to the cytoplasm. Functionally, required for rescue of stalled ribosomes mediated by trans-translation. Binds to transfer-messenger RNA (tmRNA), required for stable association of tmRNA with ribosomes. tmRNA and SmpB together mimic tRNA shape, replacing the anticodon stem-loop with SmpB. tmRNA is encoded by the ssrA gene; the 2 termini fold to resemble tRNA(Ala) and it encodes a 'tag peptide', a short internal open reading frame. During trans-translation Ala-aminoacylated tmRNA acts like a tRNA, entering the A-site of stalled ribosomes, displacing the stalled mRNA. The ribosome then switches to translate the ORF on the tmRNA; the nascent peptide is terminated with the 'tag peptide' encoded by the tmRNA and targeted for degradation. The ribosome is freed to recommence translation, which seems to be the essential function of trans-translation. This is SsrA-binding protein from Mycobacterium bovis (strain ATCC BAA-935 / AF2122/97).